Consider the following 244-residue polypeptide: Short-chain dehydrogenase/reductase family member NovK (244 aa).

Residues glycine 9 to glutamate 12, glutamate 59 to leucine 60, and arginine 154 to aspartate 158 contribute to the NADP(+) site.

It belongs to the short-chain dehydrogenases/reductases (SDR) family. In terms of assembly, heterotetramer; the NovJ(2)K(2) heterotetramer is composed of subunits of 2 NovJ and 2 subunits of NovK.

Its pathway is antibiotic biosynthesis; novobiocin biosynthesis. Its function is as follows. Non-catalytic subunit of the NovJ(2)K(2) heterotetramer that catalyzes the NADPH-dependent reduction of the tyrosyl moiety of L-beta-OH-Tyr-S-NovH intermediate to yield the tethered beta-ketotyrosyl-S-NovH in the novobiocin biosynthesis pathway. Novobiocin is an aminocoumarin family antibiotic that targets bacterial DNA gyrases. The chain is Short-chain dehydrogenase/reductase family member NovK (novK) from Streptomyces niveus (Streptomyces spheroides).